The primary structure comprises 305 residues: Dermonecrotic toxin LiSicTox-betaID1 (305 aa).

A signal peptide spans 1–18 (MQLFIILCLAGSAVQLEG). The propeptide occupies 19–26 (TELDGVER). The active site involves His38. Residues Glu58 and Asp60 each coordinate Mg(2+). The active-site Nucleophile is His74. Intrachain disulfides connect Cys78–Cys84 and Cys80–Cys223. Asp118 contacts Mg(2+).

The protein belongs to the arthropod phospholipase D family. Class II subfamily. Class IIb sub-subfamily. The cofactor is Mg(2+). Expressed by the venom gland.

It localises to the secreted. The catalysed reaction is an N-(acyl)-sphingosylphosphocholine = an N-(acyl)-sphingosyl-1,3-cyclic phosphate + choline. It catalyses the reaction an N-(acyl)-sphingosylphosphoethanolamine = an N-(acyl)-sphingosyl-1,3-cyclic phosphate + ethanolamine. The enzyme catalyses a 1-acyl-sn-glycero-3-phosphocholine = a 1-acyl-sn-glycero-2,3-cyclic phosphate + choline. It carries out the reaction a 1-acyl-sn-glycero-3-phosphoethanolamine = a 1-acyl-sn-glycero-2,3-cyclic phosphate + ethanolamine. Dermonecrotic toxins cleave the phosphodiester linkage between the phosphate and headgroup of certain phospholipids (sphingolipid and lysolipid substrates), forming an alcohol (often choline) and a cyclic phosphate. This toxin acts on sphingomyelin (SM) with low activity. It may also act on ceramide phosphoethanolamine (CPE), lysophosphatidylcholine (LPC) and lysophosphatidylethanolamine (LPE), but not on lysophosphatidylserine (LPS), and lysophosphatidylglycerol (LPG). It acts by transphosphatidylation, releasing exclusively cyclic phosphate products as second products. Has no or weak activities in inducing dermonecrosis, hemolysis, inflammatory response, platelet aggregation and increase in vessel permeability. In vivo, shows no lethality when injected at higher dose into mice. The chain is Dermonecrotic toxin LiSicTox-betaID1 from Loxosceles intermedia (Brown spider).